An 837-amino-acid polypeptide reads, in one-letter code: A disintegrin and metalloproteinase with thrombospondin motifs 4 (837 aa).

The signal sequence occupies residues 1–51; that stretch reads MSQTGSHPGRGLAGRWLWGAQPCLLLPIVPLSWLVWLLLLLLASLLPSARL. Residues 52–212 constitute a propeptide that is removed on maturation; sequence ASPLPREEEI…PSPRPRRAKR (161 aa). A glycan (N-linked (GlcNAc...) asparagine) is linked at Asn68. Positions 192 to 199 match the Cysteine switch motif; it reads PMCNVKAP. Cys194 contacts Zn(2+). Positions 218-428 constitute a Peptidase M12B domain; it reads RFVETLVVAD…GYGHCLLDKP (211 aa). Intrachain disulfides connect Cys293–Cys345, Cys322–Cys327, Cys339–Cys423, Cys377–Cys407, Cys449–Cys472, Cys460–Cys482, Cys467–Cys501, Cys495–Cys506, Cys532–Cys569, Cys536–Cys574, and Cys547–Cys559. His361 provides a ligand contact to Zn(2+). Glu362 is a catalytic residue. His365 and His371 together coordinate Zn(2+). The region spanning 437–519 is the Disintegrin domain; the sequence is TFPGKDYDAD…DQLQDFNIPQ (83 aa). In terms of domain architecture, TSP type-1 spans 520–575; that stretch reads AGGWGPWGPWGDCSRTCGGGVQFSSRDCTRPVPRNGGKYCEGRRTRFRSCNTEDCP. The spacer stretch occupies residues 686-837; it reads SKQSGSFRKF…LRRRPWAGRK (152 aa).

As to quaternary structure, interacts with SRPX2. Zn(2+) is required as a cofactor. In terms of processing, the precursor is cleaved by a furin endopeptidase. Post-translationally, glycosylated. Can be O-fucosylated by POFUT2 on a serine or a threonine residue found within the consensus sequence C1-X(2)-(S/T)-C2-G of the TSP type-1 repeat domains where C1 and C2 are the first and second cysteine residue of the repeat, respectively. Fucosylated repeats can then be further glycosylated by the addition of a beta-1,3-glucose residue by the glucosyltransferase, B3GALTL. Fucosylation mediates the efficient secretion of ADAMTS family members. Can also be C-glycosylated with one or two mannose molecules on tryptophan residues within the consensus sequence W-X-X-W of the TPRs, and N-glycosylated. These other glycosylations can also facilitate secretion. Expressed in brain, lung and heart. Expressed at very low level in placenta and skeletal muscles. Isoform 2: Detected in osteoarthritic synovium.

It localises to the secreted. Its subcellular location is the extracellular space. The protein localises to the extracellular matrix. The enzyme catalyses Glutamyl endopeptidase. Bonds cleaved include 370-Thr-Glu-Gly-Glu-|-Ala-Arg-Gly-Ser-377 in the interglobular domain of mammalian aggrecan.. Cleaves aggrecan, a cartilage proteoglycan, at the '392-Glu-|-Ala-393' site and may be involved in its turnover. Also cleaves COMP. May play an important role in the destruction of aggrecan in arthritic diseases. Could be a critical factor in the exacerbation of neurodegeneration in Alzheimer disease. This Homo sapiens (Human) protein is A disintegrin and metalloproteinase with thrombospondin motifs 4 (ADAMTS4).